The chain runs to 146 residues: Small ribosomal subunit protein uS9z (146 aa).

This sequence belongs to the universal ribosomal protein uS9 family.

This Arabidopsis thaliana (Mouse-ear cress) protein is Small ribosomal subunit protein uS9z (RPS16A).